A 69-amino-acid polypeptide reads, in one-letter code: Putative membrane protein insertion efficiency factor (69 aa).

The protein belongs to the UPF0161 family.

It is found in the cell inner membrane. In terms of biological role, could be involved in insertion of integral membrane proteins into the membrane. This is Putative membrane protein insertion efficiency factor from Azoarcus sp. (strain BH72).